Reading from the N-terminus, the 388-residue chain is GTPase Obg (388 aa).

Positions 4-162 (SNFVDYVKIY…MTVILELKLL (159 aa)) constitute an Obg domain. The tract at residues 18–45 (KGGRGSTHMRREKYTPNGGPDGGDGGRG) is disordered. Over residues 36-45 (GPDGGDGGRG) the composition is skewed to gly residues. Residues 163–329 (ADVGLVGFPN…LKDILWTELN (167 aa)) form the OBG-type G domain. GTP is bound by residues 169–176 (GFPNAGKS), 194–198 (FTTLE), 216–219 (DIPG), 283–286 (TKSD), and 310–312 (SSV). 2 residues coordinate Mg(2+): serine 176 and threonine 196. The disordered stretch occupies residues 352 to 388 (LKDMGEDEELDYEYEDDGDGDEDDLDYEYEEEDWEDK). Residues 356–388 (GEDEELDYEYEDDGDGDEDDLDYEYEEEDWEDK) show a composition bias toward acidic residues.

The protein belongs to the TRAFAC class OBG-HflX-like GTPase superfamily. OBG GTPase family. In terms of assembly, monomer. Requires Mg(2+) as cofactor.

Its subcellular location is the cytoplasm. Its function is as follows. An essential GTPase which binds GTP, GDP and possibly (p)ppGpp with moderate affinity, with high nucleotide exchange rates and a fairly low GTP hydrolysis rate. Plays a role in control of the cell cycle, stress response, ribosome biogenesis and in those bacteria that undergo differentiation, in morphogenesis control. The chain is GTPase Obg from Bacteroides fragilis (strain ATCC 25285 / DSM 2151 / CCUG 4856 / JCM 11019 / LMG 10263 / NCTC 9343 / Onslow / VPI 2553 / EN-2).